A 498-amino-acid chain; its full sequence is 3-octaprenyl-4-hydroxybenzoate carboxy-lyase (498 aa).

Asn176 serves as a coordination point for Mn(2+). Residues Ile179 to Arg181, Arg193 to Leu195, and Arg198 to Gly199 contribute to the prenylated FMN site. Glu242 contacts Mn(2+). The Proton donor role is filled by Asp291.

It belongs to the UbiD family. In terms of assembly, homohexamer. The cofactor is prenylated FMN. Requires Mn(2+) as cofactor.

The protein resides in the cell membrane. It carries out the reaction a 4-hydroxy-3-(all-trans-polyprenyl)benzoate + H(+) = a 2-(all-trans-polyprenyl)phenol + CO2. The protein operates within cofactor biosynthesis; ubiquinone biosynthesis. Its function is as follows. Catalyzes the decarboxylation of 3-octaprenyl-4-hydroxy benzoate to 2-octaprenylphenol, an intermediate step in ubiquinone biosynthesis. The polypeptide is 3-octaprenyl-4-hydroxybenzoate carboxy-lyase (Escherichia coli O6:K15:H31 (strain 536 / UPEC)).